The following is a 292-amino-acid chain: Fat storage-inducing transmembrane protein 1 (292 aa).

The Lumenal segment spans residues 1-18; that stretch reads MERGPTVGAGLGAGTRVR. A helical membrane pass occupies residues 19-39; sequence ALLGCLVKVLLWVASALLYFG. Residues 40–54 are Cytoplasmic-facing; the sequence is SEQAARLLGSPCLRR. A helical transmembrane segment spans residues 55–75; that stretch reads LYHAWLAAVVIFGPLLQFHVN. Topologically, residues 76-94 are lumenal; that stretch reads SRTIFASHGNFFNIKFVNS. The helical transmembrane segment at 95 to 115 threads the bilayer; sequence AWGWTCTFLGGFVLLVVFLAT. The Cytoplasmic segment spans residues 116-141; it reads RRVAVTARHLSRLVVGAAVWRGAGRA. Residues 142–162 form a helical membrane-spanning segment; that stretch reads FLLIEDLTGSCFEPLPQGLLL. The Lumenal portion of the chain corresponds to 163 to 187; the sequence is HELPDRKSCLAAGHQWRGYTVSSHT. H186 is a catalytic residue. The helical transmembrane segment at 188-208 threads the bilayer; sequence FLLTFCCLLMAEEAAVFAKYL. The Cytoplasmic segment spans residues 209 to 220; that stretch reads AHGLPAGAPLRL. A helical transmembrane segment spans residues 221–241; sequence VFLLNVLLLGLWNFLLLCTVI. At 242–249 the chain is on the lumenal side; the sequence is YFHQYTHK. The active site involves H244. The helical transmembrane segment at 250–270 threads the bilayer; the sequence is VVGAAVGTFAWYLTYGSWYHQ. Over 271–292 the chain is Cytoplasmic; that stretch reads PWSPGIPGHGLFPRSRSMRKHN.

This sequence belongs to the FIT family. FIT1 subfamily. As to expression, predominantly expressed in skeletal muscle and at lower levels in the heart (at protein level). In the heart, mRNA expression levels do not correlate well with protein levels, suggesting post-transcriptional regulation in this organ.

Its subcellular location is the endoplasmic reticulum membrane. Functionally, plays an important role in the formation of lipid droplets (LDs) which are storage organelles at the center of lipid and energy homeostasis. Directly binds to diacylglycerol (DAGs) and triacylglycerol. In Mus musculus (Mouse), this protein is Fat storage-inducing transmembrane protein 1.